A 200-amino-acid polypeptide reads, in one-letter code: Claudin-11 (200 aa).

Residue M1 is a topological domain, cytoplasmic. The helical transmembrane segment at 2–22 (VATCLQVVGFVTSFVGWIGVI) threads the bilayer. The Extracellular portion of the chain corresponds to 23–75 (VTTSTNDWVVTCGYTIPTCRKLDELGSKGLWADCVMATGLYHCKPLVDILPCR). The helical transmembrane segment at 76–96 (ALMIAASVLGLPAILLLLTVL) threads the bilayer. Residues 97-115 (PCIRMGQEPGVAKYRRAQL) are Cytoplasmic-facing. The chain crosses the membrane as a helical span at residues 116-136 (AGVLLILLALCAIVATIWFPV). At 137 to 150 (CAHRETTIVSFGYS) the chain is on the extracellular side. A helical transmembrane segment spans residues 151 to 171 (LYAGWIGAVLCLVGGCVILCC). Over 172–200 (AGDAQAFGENRFYYTAGSSSPTHAKSAHV) the chain is Cytoplasmic. 2 positions are modified to phosphoserine: S190 and S191.

Belongs to the claudin family. Interacts with tetraspanin-3/TSPAN3. Interacts with OCLN.

The protein localises to the cell junction. It is found in the tight junction. The protein resides in the cell membrane. Functionally, plays a major role in tight junction-specific obliteration of the intercellular space, through calcium-independent cell-adhesion activity. This is Claudin-11 (CLDN11) from Pongo abelii (Sumatran orangutan).